We begin with the raw amino-acid sequence, 161 residues long: Allophycocyanin beta chain (161 aa).

N71 bears the N4-methylasparagine mark. C81 contributes to the (2R,3E)-phycocyanobilin binding site.

The protein belongs to the phycobiliprotein family. As to quaternary structure, heterodimer of an alpha and a beta chain. Post-translationally, contains one covalently linked phycocyanobilin chromophore.

Its subcellular location is the plastid. It localises to the chloroplast thylakoid membrane. Its function is as follows. Light-harvesting photosynthetic bile pigment-protein from the phycobiliprotein complex. Allophycocyanin has a maximum absorption at approximately 650 nanometers. The protein is Allophycocyanin beta chain (apcB) of Porphyra purpurea (Red seaweed).